Here is a 231-residue protein sequence, read N- to C-terminus: Allergen Ani s 10 (231 aa).

Residues 1-19 (MHLITALVLLLQLIHFITS) form the signal peptide. Repeat copies occupy residues 28–56 (GGPGPVVGGSGIGNVWEKANEQAAEQQNI), 57–85 (GGPGPVISGSGIGDVWNKANEPAEQQENI), 86–114 (GGPGPVVSGSGIGNVWEKANEQAAHQQSI), 115–143 (EGPGPVVSGSGIGNVWEKANEQAAHQQSI), 144–172 (EGPGPVVSGSGIGDVWNKANEQAAEQQNI), 173–201 (GGPGPVISGSGIGNVWEKANEQAAEQQNI), and 204–231 (GGPGPVKSGSGIGNVWEETNEEAASMQA). Residues 28-201 (GGPGPVVGGS…NEQAAEQQNI (174 aa)) are 6 X 29 AA tandem repeats of [EG]-G-P-G-P-V-[IV]-[SG]-G-S-G-I-G-[ND]-V-W-[NE]-K-A-N-E-[QP]-A-[AE]-[QEH]-Q-[EQ]-[NS]-I. Disordered stretches follow at residues 107–126 (QAAHQQSIEGPGPVVSGSGI) and 134–231 (NEQA…SMQA). Low complexity-rich tracts occupy residues 114–123 (IEGPGPVVSG), 143–152 (IEGPGPVVSG), and 177–187 (PVISGSGIGNV).

The chain is Allergen Ani s 10 from Anisakis simplex (Herring worm).